A 668-amino-acid chain; its full sequence is L-type lectin-domain containing receptor kinase I.7 (668 aa).

An N-terminal signal peptide occupies residues M1–Q21. The Extracellular segment spans residues Q22 to P285. A legume-lectin like region spans residues T24–S256. N56, N125, N167, N201, and N223 each carry an N-linked (GlcNAc...) asparagine glycan. Residues V286–Y306 form a helical membrane-spanning segment. Residues L307–R668 are Cytoplasmic-facing. The region spanning F341–F620 is the Protein kinase domain. ATP contacts are provided by residues L347–V355 and K372. Catalysis depends on D468, which acts as the Proton acceptor.

This sequence in the C-terminal section; belongs to the protein kinase superfamily. Ser/Thr protein kinase family. The protein in the N-terminal section; belongs to the leguminous lectin family.

It localises to the cell membrane. It carries out the reaction L-seryl-[protein] + ATP = O-phospho-L-seryl-[protein] + ADP + H(+). The catalysed reaction is L-threonyl-[protein] + ATP = O-phospho-L-threonyl-[protein] + ADP + H(+). In terms of biological role, involved in resistance response to the pathogenic oomycetes Phytophthora infestans and Phytophthora capsici. This chain is L-type lectin-domain containing receptor kinase I.7, found in Arabidopsis thaliana (Mouse-ear cress).